A 148-amino-acid polypeptide reads, in one-letter code: Large ribosomal subunit protein cL37 (148 aa).

Residues 1 to 65 (MALLCFNSLP…SSHGRIVVKA (65 aa)) constitute a chloroplast transit peptide. Alanine 66 carries the N-acetylalanine modification. Positions 125-148 (LVRKRKMRKKGRWPPSKMKKNKNV) are disordered.

Belongs to the chloroplast-specific ribosomal protein cL37 family. Part of the 50S ribosomal subunit.

Its subcellular location is the plastid. The protein resides in the chloroplast. In Arabidopsis thaliana (Mouse-ear cress), this protein is Large ribosomal subunit protein cL37 (PSRP5).